We begin with the raw amino-acid sequence, 142 residues long: Nucleoside diphosphate kinase (142 aa).

ATP-binding residues include K10, F58, R86, T92, R103, and N113. The Pros-phosphohistidine intermediate role is filled by H116.

Belongs to the NDK family. Homotetramer. It depends on Mg(2+) as a cofactor.

It is found in the cytoplasm. It catalyses the reaction a 2'-deoxyribonucleoside 5'-diphosphate + ATP = a 2'-deoxyribonucleoside 5'-triphosphate + ADP. It carries out the reaction a ribonucleoside 5'-diphosphate + ATP = a ribonucleoside 5'-triphosphate + ADP. Functionally, major role in the synthesis of nucleoside triphosphates other than ATP. The ATP gamma phosphate is transferred to the NDP beta phosphate via a ping-pong mechanism, using a phosphorylated active-site intermediate. This is Nucleoside diphosphate kinase from Ehrlichia chaffeensis (strain ATCC CRL-10679 / Arkansas).